A 476-amino-acid polypeptide reads, in one-letter code: NAD(+) hydrolase ThsA (476 aa).

A Deacetylase sirtuin-type domain is found at 4-283 (NPIVELFIKD…QRIENNIKTK (280 aa)). NAD(+) is bound by residues A23, D114, and H152. The Proton acceptor role is filled by H152. The segment at 284–476 (TVFLSGSAVE…IIEFVEILSN (193 aa)) is SLOG (STALD) domain, binds 3'cADPR. Positions 289, 290, 326, 357, 371, 388, 399, and 403 each coordinate 3'cADPR.

This sequence belongs to the soluble Thoeris ThsA family. In terms of assembly, homotetramer formed by dimer of dimers; homooctamers are occasionally seen. Not seen to interact with ThsB. In the absence of the signal generated by ThsB, 63% monomer and 20% homotetramer; in the presence of the ThsB signal product 40% of the protein is dimeric. Homotetramer in solution; probably dimerizes via the N-terminal sirtuin-like domain.

The protein resides in the cytoplasm. The catalysed reaction is NAD(+) + H2O = ADP-D-ribose + nicotinamide + H(+). With respect to regulation, activated by a molecule generated by endogenous ThsB (AC J8G8J6) or ThsB' (AC J8CSK2); activation in vitro is 50-100x more sensitive to 3' cyclic ADP-D-ribose (3'cADPR) than 2'cADPR. 3'cADPR activates the NADase function of ThsA by binding to the SLOG domain, which changes its tetramer organization, allowing NAD to access the active site. Also activated by a signal molecule generated by B.dafuensis TIR1 (AC A0A5B8Z670) and TIR2 (AC A0A5B8Z260), and by BdTIR (AC I1GTC2), a plant protein involved in defense against bacterial infection. The signal produced by BdTIR is probably 2'cADPR, which activates this protein, the signal produced by endogenous ThsB' is probably 3'cADPR. In terms of biological role, NAD(+) hydrolyzing component (NADase) of the Thoeris antiviral defense system, composed of ThsA and ThsB. Activated by a signal molecule generated by endogenous ThsB (AC J8G8J6) or ThsB' (AC J8CSK2, probably 3'cADPR), by TIR1 and TIR2 from B.dafuensis or by BdTIR from B.distachyon (AC I1GTC2, probably 2'cADPR). Upon activation binds and hydrolyzes NAD(+), leading to cell death and inhibition of phage replication. Not seen to bind DNA. Activation is 50-100x more sensitive to 3' cyclic ADP-D-ribose (3'cADPR) than 2'cADPR. In another paper ThsA is not activated by any tested cADPR isomer, although it binds 3'cADPR; it was suggested the protein is already in a fully active state. Expression of ThsA and ThsB in B.subtilis (strain BEST7003) confers resistance to phages phi29, SBSphiC, SBSphiJ and SPO1. At multiplicity of infection (MOI) of 0.05 Thoeris-encoding cultures grow normally when infected with SPO1, at MOI 5 cultures collapse prematurely by 90 minutes post-infection, thus the phage are not able to complete a replication cycle. NAD(+) levels fall and ADP-D-ribose levels rise 60 minutes post-infection. Thoeris cultures eventually recover, but retain the same susceptibility to SPO1. The chain is NAD(+) hydrolase ThsA from Bacillus cereus (strain MSX-D12).